The primary structure comprises 312 residues: Oxidoreductase NAD-binding domain-containing protein 1 (312 aa).

Residues 1–17 (MACAAVMIPGLLRCSVG) form the signal peptide. The FAD-binding FR-type domain maps to 50 to 186 (HMERTASVLR…GGVGINPLLS (137 aa)). 178 to 183 (GVGINP) is a binding site for NAD(+).

This is Oxidoreductase NAD-binding domain-containing protein 1 (OXNAD1) from Homo sapiens (Human).